Reading from the N-terminus, the 500-residue chain is NAD(P)H-quinone oxidoreductase chain 4, chloroplastic (500 aa).

The next 14 membrane-spanning stretches (helical) occupy residues 4-24 (FPWLTIFVGLPISAGFLIFVF), 35-55 (YTIFICVLELLLMTYAFSYYF), 84-104 (GLSLGPILLTGFITTLATLAA), 113-133 (LFHFLMLAMYSGQIGLFSSQN), 134-154 (LLLFFIMWELELIPVYLLLAM), 167-187 (FILYTAGSSVFLLMGALGIAF), 211-231 (ILFYIGFLIAFAVKSPIIPLH), 242-262 (HYSTCMLLAGILLKMGAYGLV), 272-292 (AHSIFSSWLIIVGAIQIIYAA), 305-325 (IAYSSVSHMGFTIIGICSISD), 330-350 (GAILQIISHGFIGAALFFLSG), 386-406 (LALPGMSGFFAELVVFFGIIT), 416-436 (ILITFVTAVGTILTPIYLLSM), and 463-483 (FVSIAILLPVISIGIYPDFVF).

The protein belongs to the complex I subunit 4 family.

It is found in the plastid. The protein localises to the chloroplast thylakoid membrane. It carries out the reaction a plastoquinone + NADH + (n+1) H(+)(in) = a plastoquinol + NAD(+) + n H(+)(out). The catalysed reaction is a plastoquinone + NADPH + (n+1) H(+)(in) = a plastoquinol + NADP(+) + n H(+)(out). This is NAD(P)H-quinone oxidoreductase chain 4, chloroplastic from Populus trichocarpa (Western balsam poplar).